Here is a 295-residue protein sequence, read N- to C-terminus: Protoheme IX farnesyltransferase (295 aa).

Over 1-9 (MSVKHFIQI) the chain is Cytoplasmic. Residues 10-28 (TKPGIIFGNVLSVAGGFFL) traverse the membrane as a helical segment. Over 29–37 (ASKGHVDFA) the chain is Periplasmic. A helical transmembrane segment spans residues 38–56 (LFLAVVIGTSLVVASGCVF). Residues 57 to 78 (NNCIDRDIDHKMERTKNRVMVQ) lie on the Cytoplasmic side of the membrane. A helical membrane pass occupies residues 79-97 (GGMSLPLALIYATLLGVAG). The Periplasmic portion of the chain corresponds to 98-107 (FSLLYVQANP). The chain crosses the membrane as a helical span at residues 108–126 (LSAFCALIGFIVYVGFYSL). Residues 127-197 (WLKRKSVHGT…YSAANIPVLP (71 aa)) are Cytoplasmic-facing. A helical membrane pass occupies residues 198 to 216 (VARGILAAKKQIVLYVLAF). Over 217 to 228 (VLATLMLTLGGY) the chain is Periplasmic. A helical transmembrane segment spans residues 229-247 (AGLGYLAVAAAMGLYWLYM). Residues 248 to 268 (AWGGYKAEDDSKWARKVFGFS) lie on the Cytoplasmic side of the membrane. A helical transmembrane segment spans residues 269 to 287 (ILTVTALSVMMGVDSQTAA). Topologically, residues 288–295 (DVLMTYAR) are periplasmic.

The protein belongs to the UbiA prenyltransferase family. It depends on Mg(2+) as a cofactor. Ca(2+) is required as a cofactor.

It is found in the cell inner membrane. The enzyme catalyses heme b + (2E,6E)-farnesyl diphosphate + H2O = Fe(II)-heme o + diphosphate. Converts protoheme IX and farnesyl diphosphate to heme O. This chain is Protoheme IX farnesyltransferase (cyoE), found in Pseudomonas putida (Arthrobacter siderocapsulatus).